Consider the following 393-residue polypeptide: NAD(P)H-quinone oxidoreductase subunit H, chloroplastic (393 aa).

Belongs to the complex I 49 kDa subunit family. In terms of assembly, NDH is composed of at least 16 different subunits, 5 of which are encoded in the nucleus.

It localises to the plastid. The protein localises to the chloroplast thylakoid membrane. It carries out the reaction a plastoquinone + NADH + (n+1) H(+)(in) = a plastoquinol + NAD(+) + n H(+)(out). The enzyme catalyses a plastoquinone + NADPH + (n+1) H(+)(in) = a plastoquinol + NADP(+) + n H(+)(out). In terms of biological role, NDH shuttles electrons from NAD(P)H:plastoquinone, via FMN and iron-sulfur (Fe-S) centers, to quinones in the photosynthetic chain and possibly in a chloroplast respiratory chain. The immediate electron acceptor for the enzyme in this species is believed to be plastoquinone. Couples the redox reaction to proton translocation, and thus conserves the redox energy in a proton gradient. This chain is NAD(P)H-quinone oxidoreductase subunit H, chloroplastic, found in Draba nemorosa (Woodland whitlowgrass).